The chain runs to 163 residues: Putative pre-16S rRNA nuclease (163 aa).

It belongs to the YqgF nuclease family.

The protein localises to the cytoplasm. Could be a nuclease involved in processing of the 5'-end of pre-16S rRNA. In Nitrobacter hamburgensis (strain DSM 10229 / NCIMB 13809 / X14), this protein is Putative pre-16S rRNA nuclease.